A 233-amino-acid chain; its full sequence is 7-cyano-7-deazaguanine synthase (233 aa).

Residue 11–21 (LSGGLDSSTVL) coordinates ATP. Zn(2+)-binding residues include C195, C203, C206, and C209.

This sequence belongs to the QueC family. Requires Zn(2+) as cofactor.

The catalysed reaction is 7-carboxy-7-deazaguanine + NH4(+) + ATP = 7-cyano-7-deazaguanine + ADP + phosphate + H2O + H(+). The protein operates within purine metabolism; 7-cyano-7-deazaguanine biosynthesis. In terms of biological role, catalyzes the ATP-dependent conversion of 7-carboxy-7-deazaguanine (CDG) to 7-cyano-7-deazaguanine (preQ(0)). The sequence is that of 7-cyano-7-deazaguanine synthase from Thermosynechococcus vestitus (strain NIES-2133 / IAM M-273 / BP-1).